Consider the following 393-residue polypeptide: 5-azacytidine-induced protein 2 (393 aa).

The tract at residues 1-198 (MDALVEDDIC…IELQKAKQTD (198 aa)) is homodimerization. The stretch at 40 to 198 (ALVTAYEDIK…IELQKAKQTD (159 aa)) forms a coiled coil. The tract at residues 217 to 258 (SDNMQSAYWELKREMSNLHLVTQVQAELLRKLKTPAAIKKAC) is interaction with TBK1 and IKBKE. Ser319 is subject to Phosphoserine. Disordered stretches follow at residues 321–340 (TDHE…HNSY) and 345–393 (LEDN…HYKH). Position 354 is a phosphoserine (Ser354). Residues 384–393 (QHNQNCHYKH) show a composition bias toward polar residues.

In terms of assembly, homodimer. Interacts with IKBKE, TBK1 and TICAM1. Interacts with TAX1BP1. Interacts with CALCOCO2. Ubiquitinated via 'Lys-48'-linked polyubiquitination by TRIM38, leading to its degradation.

The protein localises to the cytoplasm. Functionally, adapter protein which binds TBK1 and IKBKE playing a role in antiviral innate immunity. Activates serine/threonine-protein kinase TBK1 and facilitates its oligomerization. Enhances the phosphorylation of NF-kappa-B p65 subunit RELA by TBK1. Promotes TBK1-induced as well as TNF-alpha or PMA-induced activation of NF-kappa-B. Participates in IFNB promoter activation via TICAM1. This is 5-azacytidine-induced protein 2 (AZI2) from Bos taurus (Bovine).